The chain runs to 1254 residues: DNA-directed RNA polymerase subunit beta' (1254 aa).

Zn(2+) is bound by residues cysteine 59, cysteine 61, cysteine 76, and cysteine 79. Residues aspartate 501, aspartate 503, and aspartate 505 each contribute to the Mg(2+) site. 4 residues coordinate Zn(2+): cysteine 871, cysteine 946, cysteine 953, and cysteine 956.

The protein belongs to the RNA polymerase beta' chain family. As to quaternary structure, the RNAP catalytic core consists of 2 alpha, 1 beta, 1 beta' and 1 omega subunit. When a sigma factor is associated with the core the holoenzyme is formed, which can initiate transcription. The cofactor is Mg(2+). It depends on Zn(2+) as a cofactor.

The catalysed reaction is RNA(n) + a ribonucleoside 5'-triphosphate = RNA(n+1) + diphosphate. Its function is as follows. DNA-dependent RNA polymerase catalyzes the transcription of DNA into RNA using the four ribonucleoside triphosphates as substrates. The polypeptide is DNA-directed RNA polymerase subunit beta' (Mesoplasma florum (strain ATCC 33453 / NBRC 100688 / NCTC 11704 / L1) (Acholeplasma florum)).